A 156-amino-acid polypeptide reads, in one-letter code: Small ribosomal subunit protein uS7c (156 aa).

The protein belongs to the universal ribosomal protein uS7 family. In terms of assembly, part of the 30S ribosomal subunit.

It is found in the plastid. The protein resides in the chloroplast. One of the primary rRNA binding proteins, it binds directly to 16S rRNA where it nucleates assembly of the head domain of the 30S subunit. In Stangeria eriopus (Natal grass cycad), this protein is Small ribosomal subunit protein uS7c (rps7).